We begin with the raw amino-acid sequence, 316 residues long: Phospholipase A1 4 (316 aa).

Residues 1-4 (ADDL) form the signal peptide. Positions 5-14 (TTLRNGTLDR) are excised as a propeptide. Cys20 and Cys103 are disulfide-bonded. The Nucleophile role is filled by Ser153. Asp181 acts as the Charge relay system in catalysis. Cystine bridges form between Cys192/Cys197 and Cys235/Cys240. Catalysis depends on His242, which acts as the Charge relay system. Cystine bridges form between Cys257–Cys284, Cys258–Cys309, and Cys277–Cys282.

It belongs to the AB hydrolase superfamily. Lipase family. As to expression, expressed by the venom gland.

It is found in the secreted. The catalysed reaction is a 1,2-diacyl-sn-glycero-3-phosphocholine + H2O = a 2-acyl-sn-glycero-3-phosphocholine + a fatty acid + H(+). Functionally, catalyzes the hydrolysis of phosphatidylcholine with phospholipase A1 activity. May act as an allergen and induce hemolytic activity. This Polistes dominula (European paper wasp) protein is Phospholipase A1 4.